The chain runs to 225 residues: Phosphoserine phosphatase (225 aa).

The residue at position 1 (Met-1) is an N-acetylmethionine. The active-site Nucleophile is Asp-20. Residues Asp-20 and Asp-22 each coordinate Mg(2+). An L-serine-binding site is contributed by 20 to 22 (DVD). Catalysis depends on Asp-22, which acts as the Proton donor. O-phospho-L-serine is bound at residue Met-52. Gly-53 is a phosphate binding site. L-serine contacts are provided by residues 109–111 (SGG) and Lys-158. O-phospho-L-serine-binding positions include 109–111 (SGG) and Lys-158. Asp-179 lines the Mg(2+) pocket. Thr-182 contributes to the O-phospho-L-serine binding site. Thr-182 contacts phosphate.

It belongs to the HAD-like hydrolase superfamily. SerB family. In terms of assembly, homodimer. Mg(2+) serves as cofactor.

Its subcellular location is the cytoplasm. The protein resides in the cytosol. It catalyses the reaction O-phospho-L-serine + H2O = L-serine + phosphate. The catalysed reaction is O-phospho-D-serine + H2O = D-serine + phosphate. It participates in amino-acid biosynthesis; L-serine biosynthesis; L-serine from 3-phospho-D-glycerate: step 3/3. Its function is as follows. Catalyzes the last irreversible step in the biosynthesis of L-serine from carbohydrates, the dephosphorylation of O-phospho-L-serine to L-serine. L-serine can then be used in protein synthesis, to produce other amino acids, in nucleotide metabolism or in glutathione synthesis, or can be racemized to D-serine, a neuromodulator. May also act on O-phospho-D-serine. The protein is Phosphoserine phosphatase of Rattus norvegicus (Rat).